A 597-amino-acid polypeptide reads, in one-letter code: MKNIRNFSIIAHIDHGKSTLADRFIQYCGGLDLREMSTQVLDSMDIEKERGITIKAQTAALNYKARDGQVYQLNLIDTPGHVDFSYEVSRSLSACEGALLVVDASQGVEAQTVANCYTAIDLGVEVVPVLNKIDLPAADPERVEQEIEDIIGIDAVGAVQCSAKSGIGVEDVLEEIVAKIPAPTGDENAPLQAVIVDSWFDNYVGVVMLIRVKNGTIKLKDKVRFMSTKAETQVEQLGVFTPKSVQKQELKAGEVGFLITGVKELGQAKVGDTVTLVANPATEPLPGFQEVQSQVFAGLYPVESHDYEALRDALEKLQLNDASLKFEPEVSQALGFGFRCGFLGLLHLEIVQERLEREFDMDLITTAPTVVYEVVLKSGEKIEVENPSKLPDIGSIETILEPIITATILVPQEYVGNVMTLCNQKRGVQVNMQYMGRQVMLTYDLPMNEVVMDFFDKLKSTSRGYASLDYHFKEFQPSDLIKLDIMVNGEKVDALSLIVHRQSAVHRGRELASKMRELIPRQMFDIAVQAAIGSQIIARENVKALRKNVLAKCYGGDITRKKKLLEKQKAGKRRMKQVGNVEIPQSAFLAILQVSDK.

The tr-type G domain maps to 2–184; that stretch reads KNIRNFSIIA…EIVAKIPAPT (183 aa). Residues 14 to 19 and 131 to 134 contribute to the GTP site; these read DHGKST and NKID.

This sequence belongs to the TRAFAC class translation factor GTPase superfamily. Classic translation factor GTPase family. LepA subfamily.

It is found in the cell inner membrane. The enzyme catalyses GTP + H2O = GDP + phosphate + H(+). Its function is as follows. Required for accurate and efficient protein synthesis under certain stress conditions. May act as a fidelity factor of the translation reaction, by catalyzing a one-codon backward translocation of tRNAs on improperly translocated ribosomes. Back-translocation proceeds from a post-translocation (POST) complex to a pre-translocation (PRE) complex, thus giving elongation factor G a second chance to translocate the tRNAs correctly. Binds to ribosomes in a GTP-dependent manner. The polypeptide is Elongation factor 4 (Neisseria meningitidis serogroup C / serotype 2a (strain ATCC 700532 / DSM 15464 / FAM18)).